The chain runs to 292 residues: F-box protein SKIP28 (292 aa).

Positions 21–79 (LIVLPYLHSLFELLSMIRVSRSLRDAIRDETALWTKLVIEPPLSSRLTDDILSEFSSKS) constitute an F-box; degenerate domain.

Part of a SCF (ASK-cullin-F-box) protein ligase complex. Interacts with SKP1A/ASK1 and CUL1.

The protein operates within protein modification; protein ubiquitination. Functionally, component of SCF(ASK-cullin-F-box) E3 ubiquitin ligase complexes, which may mediate the ubiquitination and subsequent proteasomal degradation of target proteins. Required during the endosperm development in embryos. This chain is F-box protein SKIP28 (SKIP28), found in Arabidopsis thaliana (Mouse-ear cress).